A 605-amino-acid polypeptide reads, in one-letter code: Isocitrate dehydrogenase kinase/phosphatase (605 aa).

Residues 327-333 and Lys348 contribute to the ATP site; that span reads APGIKGL. Asp383 is an active-site residue.

This sequence belongs to the AceK family.

The protein resides in the cytoplasm. The enzyme catalyses L-seryl-[isocitrate dehydrogenase] + ATP = O-phospho-L-seryl-[isocitrate dehydrogenase] + ADP + H(+). Its function is as follows. Bifunctional enzyme which can phosphorylate or dephosphorylate isocitrate dehydrogenase (IDH) on a specific serine residue. This is a regulatory mechanism which enables bacteria to bypass the Krebs cycle via the glyoxylate shunt in response to the source of carbon. When bacteria are grown on glucose, IDH is fully active and unphosphorylated, but when grown on acetate or ethanol, the activity of IDH declines drastically concomitant with its phosphorylation. This is Isocitrate dehydrogenase kinase/phosphatase from Burkholderia orbicola (strain MC0-3).